The sequence spans 176 residues: RNA polymerase sigma factor SigZ (176 aa).

The Polymerase core binding motif lies at 30–43 (DLLQIVFMKIQVHL). A DNA-binding region (H-T-H motif) is located at residues 125–144 (QKELSEKLGISYSGAKSRVQ).

The protein belongs to the sigma-70 factor family. ECF subfamily.

Its function is as follows. Sigma factors are initiation factors that promote the attachment of RNA polymerase to specific initiation sites and are then released. The protein is RNA polymerase sigma factor SigZ (sigZ) of Bacillus subtilis (strain 168).